The chain runs to 66 residues: Large ribosomal subunit protein uL29 (66 aa).

This sequence belongs to the universal ribosomal protein uL29 family.

This is Large ribosomal subunit protein uL29 from Lysinibacillus sphaericus (strain C3-41).